The following is a 442-amino-acid chain: Histidine--tRNA ligase (442 aa).

The protein belongs to the class-II aminoacyl-tRNA synthetase family. Homodimer.

It is found in the cytoplasm. It catalyses the reaction tRNA(His) + L-histidine + ATP = L-histidyl-tRNA(His) + AMP + diphosphate + H(+). The chain is Histidine--tRNA ligase from Helicobacter hepaticus (strain ATCC 51449 / 3B1).